We begin with the raw amino-acid sequence, 221 residues long: Probable GTP-binding protein EngB (221 aa).

Residues Pro23–Glu211 form the EngB-type G domain. Positions 38 and 60 each coordinate Mg(2+).

This sequence belongs to the TRAFAC class TrmE-Era-EngA-EngB-Septin-like GTPase superfamily. EngB GTPase family. Mg(2+) is required as a cofactor.

Functionally, necessary for normal cell division and for the maintenance of normal septation. The sequence is that of Probable GTP-binding protein EngB from Polynucleobacter asymbioticus (strain DSM 18221 / CIP 109841 / QLW-P1DMWA-1) (Polynucleobacter necessarius subsp. asymbioticus).